The chain runs to 232 residues: tRNA (guanine-N(1)-)-methyltransferase (232 aa).

S-adenosyl-L-methionine contacts are provided by residues G111 and 131-136 (IGDYIL).

The protein belongs to the RNA methyltransferase TrmD family. Homodimer.

Its subcellular location is the cytoplasm. It catalyses the reaction guanosine(37) in tRNA + S-adenosyl-L-methionine = N(1)-methylguanosine(37) in tRNA + S-adenosyl-L-homocysteine + H(+). Its function is as follows. Specifically methylates guanosine-37 in various tRNAs. In Bartonella tribocorum (strain CIP 105476 / IBS 506), this protein is tRNA (guanine-N(1)-)-methyltransferase.